Here is a 314-residue protein sequence, read N- to C-terminus: Glutathione synthetase (314 aa).

The region spanning 125 to 311 (EKIAAQLFPQ…IAGQLFDAIE (187 aa)) is the ATP-grasp domain. 151–208 (FVQKQEQAILKPLDGMGGHSIFRSSNGDPNLNVILETLTDGGRTLAIAQRYLQQIIEG) is a binding site for ATP. Mg(2+) is bound by residues Glu282 and Asn284.

Belongs to the prokaryotic GSH synthase family. Mg(2+) serves as cofactor. The cofactor is Mn(2+).

It carries out the reaction gamma-L-glutamyl-L-cysteine + glycine + ATP = glutathione + ADP + phosphate + H(+). Its pathway is sulfur metabolism; glutathione biosynthesis; glutathione from L-cysteine and L-glutamate: step 2/2. This chain is Glutathione synthetase, found in Xylella fastidiosa (strain Temecula1 / ATCC 700964).